The primary structure comprises 319 residues: Probable carboxylesterase 5 (319 aa).

Residue Met1 is modified to N-acetylmethionine. An Involved in the stabilization of the negatively charged intermediate by the formation of the oxyanion hole motif is present at residues 79-81 (HGG). Active-site residues include Ser163, Asp262, and His294.

The protein belongs to the 'GDXG' lipolytic enzyme family. In terms of tissue distribution, expressed in roots, leaves, stems, flowers and siliques.

It carries out the reaction a carboxylic ester + H2O = an alcohol + a carboxylate + H(+). Carboxylesterase acting on esters with varying acyl chain length. This is Probable carboxylesterase 5 (CXE5) from Arabidopsis thaliana (Mouse-ear cress).